We begin with the raw amino-acid sequence, 158 residues long: MSKESRIFIEISENIIDLNYWYKIVSDDSSGATSSFLGTTRNEFKGKSVERLEYETYEPMAIKEIEKICKTILNGFENDIKKIGIVHRIGNVPVGESSILIVISSGHRKSSLEAVHYAIDTIKSTVPIWKKEFYTDGSENQWKGNCESCHFNNNNHPH.

Substrate-binding positions include 107–108 (HR), K123, and 130–132 (KKE).

It belongs to the MoaE family. MOCS2B subfamily. Heterotetramer; composed of 2 small (mocs2s) and 2 large (mocs2l) subunits.

It localises to the cytoplasm. The catalysed reaction is 2 [molybdopterin-synthase sulfur-carrier protein]-C-terminal-Gly-aminoethanethioate + cyclic pyranopterin phosphate + H2O = molybdopterin + 2 [molybdopterin-synthase sulfur-carrier protein]-C-terminal Gly-Gly + 2 H(+). The protein operates within cofactor biosynthesis; molybdopterin biosynthesis. Catalytic subunit of the molybdopterin synthase complex, a complex that catalyzes the conversion of precursor Z into molybdopterin. Acts by mediating the incorporation of 2 sulfur atoms from thiocarboxylated mocs2s into precursor Z to generate a dithiolene group. This Dictyostelium discoideum (Social amoeba) protein is Molybdopterin synthase catalytic subunit (mocs2l).